A 145-amino-acid polypeptide reads, in one-letter code: MIKTILVVCIGNICRSPMAQALLRQALPGVSVISAGIGALSGYPADPSAVEVMAQHGIDISEHRAQQLTGSLVNRADLILVMGGAQKREIQARHPSKTGSVFRLGEMEQFDIDDPYRKQMMAFEDALAMIQRGVDAWVPRIRALG.

Cysteine 9 acts as the Nucleophile in catalysis. Residue arginine 15 is part of the active site. The active-site Proton donor is aspartate 114.

It belongs to the low molecular weight phosphotyrosine protein phosphatase family.

It catalyses the reaction O-phospho-L-tyrosyl-[protein] + H2O = L-tyrosyl-[protein] + phosphate. It participates in glycan metabolism; exopolysaccharide biosynthesis. Functionally, may be involved in assembly or function of the EPS I polymerization/export complex and/or the EpsB ATPase. Alternatively it may function in the removal of the terminal phosphate from C55-isoprenyl pyrophosphate in order to recycle the C55-isoprenyl phosphate lipid carrier used in the synthesis of polysaccharide repeat units. The polypeptide is Probable low molecular weight protein-tyrosine-phosphatase EpsP (epsP) (Ralstonia solanacearum (Pseudomonas solanacearum)).